A 97-amino-acid chain; its full sequence is Small integral membrane protein 8 (97 aa).

Positions 1–24 (MSSAPEPPTFKKEPPKEKDFQSPG) are disordered. Residues 9-20 (TFKKEPPKEKDF) show a composition bias toward basic and acidic residues. Residues 48-67 (PVMAFGLVTLSLCVAYIGYL) traverse the membrane as a helical segment.

It belongs to the SMIM8 family.

The protein localises to the membrane. The polypeptide is Small integral membrane protein 8 (SMIM8) (Pongo abelii (Sumatran orangutan)).